A 202-amino-acid chain; its full sequence is U-Kazal-Dg21.2 (202 aa).

Residues 1–20 (MKYFLWSAVTIFAIVNVVGA) form the signal peptide. The propeptide occupies 21 to 87 (KNSDFDPRCL…SFCQVEEDFD (67 aa)). Kazal-like domains lie at 23 to 77 (SDFD…KTLM), 85 to 140 (DFDS…ICRN), and 148 to 202 (IDPK…KGEC). Cystine bridges form between cysteine 29-cysteine 62, cysteine 33-cysteine 55, cysteine 91-cysteine 124, cysteine 95-cysteine 117, and cysteine 103-cysteine 138. A glycan (N-linked (GlcNAc...) asparagine) is linked at asparagine 140. Residues 142–202 (SFKSELIDPK…NWTLIRKGEC (61 aa)) constitute a propeptide that is removed on maturation. Disulfide bonds link cysteine 154–cysteine 187, cysteine 158–cysteine 180, and cysteine 166–cysteine 202. N-linked (GlcNAc...) asparagine glycosylation is present at asparagine 193.

In terms of tissue distribution, expressed by the venom gland.

The protein localises to the secreted. Functionally, may act as a serine protease inhibitor, since it possess the kazal serine protease inhibitor signature. The recombinant peptide does not produce toxic effects on insects. In Dolopus genitalis (Giant Australian assassin fly), this protein is U-Kazal-Dg21.2.